Reading from the N-terminus, the 399-residue chain is Acetate kinase (399 aa).

N10 contributes to the Mg(2+) binding site. ATP is bound at residue K17. Residue R91 participates in substrate binding. Residue D148 is the Proton donor/acceptor of the active site. Residues 208 to 212 (HLGNG), 283 to 285 (DCR), and 331 to 335 (GIGEN) contribute to the ATP site. E385 lines the Mg(2+) pocket.

This sequence belongs to the acetokinase family. In terms of assembly, homodimer. Mg(2+) is required as a cofactor. It depends on Mn(2+) as a cofactor.

The protein localises to the cytoplasm. It catalyses the reaction acetate + ATP = acetyl phosphate + ADP. It functions in the pathway metabolic intermediate biosynthesis; acetyl-CoA biosynthesis; acetyl-CoA from acetate: step 1/2. In terms of biological role, catalyzes the formation of acetyl phosphate from acetate and ATP. Can also catalyze the reverse reaction. This chain is Acetate kinase, found in Shewanella sp. (strain ANA-3).